The following is a 430-amino-acid chain: Serine/threonine-protein kinase Sgk1 (430 aa).

Positions 1–60 (MTVKTEAARSTLTYSRMRGMVAILIAFMKQRRMGLNDFIQKLANNSYACKHPEVQSYLKI) are necessary for localization to the mitochondria. The tract at residues 66-92 (PELMNANPSPPPSPSQQINLGPSSNPH) is disordered. Ser-74 carries the phosphoserine modification. Phosphoserine; by MAPK7 is present on Ser-78. Residues 81 to 91 (QQINLGPSSNP) show a composition bias toward polar residues. Residues 98-354 (FHFLKVIGKG…FMEIKSHIFF (257 aa)) form the Protein kinase domain. ATP is bound by residues 104-112 (IGKGSFGKV) and Lys-127. The short motif at 131–141 (KKAILKKKEEK) is the Nuclear localization signal element. Asp-222 serves as the catalytic Proton acceptor. Residue Thr-256 is modified to Phosphothreonine; by PDPK1. Residues 355–430 (SLINWDDLIN…SYAPPMDSFL (76 aa)) enclose the AGC-kinase C-terminal domain. Thr-368 carries the phosphothreonine; by PKA modification. Phosphoserine is present on residues Ser-396, Ser-400, and Ser-421.

Belongs to the protein kinase superfamily. AGC Ser/Thr protein kinase family. As to quaternary structure, homodimer; disulfide-linked. Forms a trimeric complex with FBXW7 and NOTCH1. Interacts with MAPK3/ERK1, MAPK1/ERK2, MAP2K1/MEK1, MAP2K2/MEK2, NEDD4, NEDD4L, MAPK7, CREB1, SLC9A3R2/NHERF2 and KCNJ1/ROMK1. Associates with the mammalian target of rapamycin complex 2 (mTORC2) via an interaction with MAPKAP1/SIN1. Interacts with MAPT/TAU. Regulated by phosphorylation. Activated by phosphorylation on Ser-421 by mTORC2, transforming it into a substrate for PDPK1 which phosphorylates it on Thr-256. Phosphorylation on Ser-396 and Ser-400 are also essential for its activity. Phosphorylation on Ser-78 by MAPK7 is required for growth factor-induced cell cycle progression. Post-translationally, ubiquitinated by NEDD4L; which promotes proteasomal degradation. Ubiquitinated by SYVN1 at the endoplasmic reticulum; which promotes rapid proteasomal degradation and maintains a high turnover rate in resting cells. Expressed in most tissues with highest levels in the ovary, thymus and lung. In the kidney, expressed within glomeruli of the cortex, at low levels in outer medulla and moderate levels in inner medulla and papilla.

Its subcellular location is the cytoplasm. It is found in the nucleus. The protein localises to the endoplasmic reticulum membrane. The protein resides in the cell membrane. It localises to the mitochondrion. The enzyme catalyses L-seryl-[protein] + ATP = O-phospho-L-seryl-[protein] + ADP + H(+). The catalysed reaction is L-threonyl-[protein] + ATP = O-phospho-L-threonyl-[protein] + ADP + H(+). With respect to regulation, two specific sites, one in the kinase domain (Thr-256) and the other in the C-terminal regulatory region (Ser-421), need to be phosphorylated for its full activation. Phosphorylation at Ser-396 and Ser-400 are also essential for its activity. Activated by WNK1, WNK2, WNK3 and WNK4. Its function is as follows. Serine/threonine-protein kinase which is involved in the regulation of a wide variety of ion channels, membrane transporters, cellular enzymes, transcription factors, neuronal excitability, cell growth, proliferation, survival, migration and apoptosis. Plays an important role in cellular stress response. Contributes to regulation of renal Na(+) retention, renal K(+) elimination, salt appetite, gastric acid secretion, intestinal Na(+)/H(+) exchange and nutrient transport, insulin-dependent salt sensitivity of blood pressure, salt sensitivity of peripheral glucose uptake, cardiac repolarization and memory consolidation. Up-regulates Na(+) channels: SCNN1A/ENAC, SCN5A and ASIC1/ACCN2, K(+) channels: KCNJ1/ROMK1, KCNA1-5, KCNQ1-5 and KCNE1, epithelial Ca(2+) channels: TRPV5 and TRPV6, chloride channels: BSND, CLCN2 and CFTR, glutamate transporters: SLC1A3/EAAT1, SLC1A2 /EAAT2, SLC1A1/EAAT3, SLC1A6/EAAT4 and SLC1A7/EAAT5, amino acid transporters: SLC1A5/ASCT2, SLC38A1/SN1 and SLC6A19, creatine transporter: SLC6A8, Na(+)/dicarboxylate cotransporter: SLC13A2/NADC1, Na(+)-dependent phosphate cotransporter: SLC34A2/NAPI-2B, glutamate receptor: GRIK2/GLUR6. Up-regulates carriers: SLC9A3/NHE3, SLC12A1/NKCC2, SLC12A3/NCC, SLC5A3/SMIT, SLC2A1/GLUT1, SLC5A1/SGLT1 and SLC15A2/PEPT2. Regulates enzymes: GSK3A/B, PMM2 and Na(+)/K(+) ATPase, and transcription factors: CTNNB1 and nuclear factor NF-kappa-B. Stimulates sodium transport into epithelial cells by enhancing the stability and expression of SCNN1A/ENAC. This is achieved by phosphorylating the NEDD4L ubiquitin E3 ligase, promoting its interaction with 14-3-3 proteins, thereby preventing it from binding to SCNN1A/ENAC and targeting it for degradation. Regulates store-operated Ca(+2) entry (SOCE) by stimulating ORAI1 and STIM1. Regulates KCNJ1/ROMK1 directly via its phosphorylation or indirectly via increased interaction with SLC9A3R2/NHERF2. Phosphorylates MDM2 and activates MDM2-dependent ubiquitination of p53/TP53. Phosphorylates SLC2A4/GLUT4 and up-regulates its activity. Phosphorylates APBB1/FE65 and promotes its localization to the nucleus. Phosphorylates FBXW7 and plays an inhibitory role in the NOTCH1 signaling. Phosphorylates FOXO1 resulting in its relocalization from the nucleus to the cytoplasm. Phosphorylates FOXO3, promoting its exit from the nucleus and interference with FOXO3-dependent transcription. Phosphorylates BRAF and MAP3K3/MEKK3 and inhibits their activity. Phosphorylates SLC9A3/NHE3 in response to dexamethasone, resulting in its activation and increased localization at the cell membrane. Phosphorylates CREB1. Necessary for vascular remodeling during angiogenesis. Phosphorylates MAPT/TAU and mediates microtubule depolymerization and neurite formation in hippocampal neurons. Phosphorylates MAPK1/ERK2 and activates it by enhancing its interaction with MAP2K1/MEK1 and MAP2K2/MEK2. May also play an important role in the development of particular groups of neurons in the postnatal brain. The sequence is that of Serine/threonine-protein kinase Sgk1 (Sgk1) from Rattus norvegicus (Rat).